The following is a 360-amino-acid chain: UDP-N-acetylglucosamine--N-acetylmuramyl-(pentapeptide) pyrophosphoryl-undecaprenol N-acetylglucosamine transferase (360 aa).

UDP-N-acetyl-alpha-D-glucosamine contacts are provided by residues 11–13 (TGG), Asn-117, Arg-160, Ser-192, and Gln-294.

It belongs to the glycosyltransferase 28 family. MurG subfamily.

It localises to the cell inner membrane. The catalysed reaction is di-trans,octa-cis-undecaprenyl diphospho-N-acetyl-alpha-D-muramoyl-L-alanyl-D-glutamyl-meso-2,6-diaminopimeloyl-D-alanyl-D-alanine + UDP-N-acetyl-alpha-D-glucosamine = di-trans,octa-cis-undecaprenyl diphospho-[N-acetyl-alpha-D-glucosaminyl-(1-&gt;4)]-N-acetyl-alpha-D-muramoyl-L-alanyl-D-glutamyl-meso-2,6-diaminopimeloyl-D-alanyl-D-alanine + UDP + H(+). Its pathway is cell wall biogenesis; peptidoglycan biosynthesis. Its function is as follows. Cell wall formation. Catalyzes the transfer of a GlcNAc subunit on undecaprenyl-pyrophosphoryl-MurNAc-pentapeptide (lipid intermediate I) to form undecaprenyl-pyrophosphoryl-MurNAc-(pentapeptide)GlcNAc (lipid intermediate II). This Rickettsia felis (strain ATCC VR-1525 / URRWXCal2) (Rickettsia azadi) protein is UDP-N-acetylglucosamine--N-acetylmuramyl-(pentapeptide) pyrophosphoryl-undecaprenol N-acetylglucosamine transferase.